The primary structure comprises 1016 residues: Primary septum glucan endo-1,3-beta-D-glucosidase (1016 aa).

Positions 1–20 (MSSYLRSFIFGLLTISLAQC) are cleaved as a signal peptide. N37 carries an N-linked (GlcNAc...) asparagine glycan. The interval 45-272 (TNVFDSVVDT…NGYIQIAKIP (228 aa)) is beta-sandwich subdomain. A GH81 domain is found at 45–741 (TNVFDSVVDT…AYAAGLWAND (697 aa)). The alpha/beta subdomain stretch occupies residues 273–364 (LGDGTAEALY…AGNSITFAEA (92 aa)). Residues 379–741 (GQIGYSEEAL…AYAAGLWAND (363 aa)) are (alpha/beta)6 barrel subdomain. D492 is an active-site residue. Residues H496, D567, E569, E573, and Y650 each contribute to the (1,3-beta-D-glucosyl)n site. Active-site residues include E569 and E573. Residues 748 to 1016 (SSSSTTTTST…GCSNGALVAA (269 aa)) are required for catalytic activity against insoluble beta-glucan and to restrict localization of the enzyme to the cell septum. The tract at residues 844–872 (SSTTSSITPTPTTTSSITPTPTTTSTTTT) is disordered.

Belongs to the glycosyl hydrolase 81 family.

The protein resides in the cell septum. It carries out the reaction Hydrolysis of (1-&gt;3)-beta-D-glucosidic linkages in (1-&gt;3)-beta-D-glucans.. In terms of biological role, cleaves internal linkages in 1,3-beta-glucan. Has a role in cell separation where it is required for the degradation of the primary septum after completion of cytokinesis. The sequence is that of Primary septum glucan endo-1,3-beta-D-glucosidase from Schizosaccharomyces pombe (strain 972 / ATCC 24843) (Fission yeast).